Reading from the N-terminus, the 172-residue chain is MITMPKLFIYHANQCNPKKCTSLKMAKMNKAILLKNPYKVPKNSLILNPYAEKALSPEDKEIVEKFGITALDCSWKEAELMFKKFKFKNQRSLPFLVACNPINYGKPCMLSTLEAFIAALYITNFKDEAWDLTSCFKWAETFIKVNYELLERYSNAKNSMEVVEIQQDFLRK.

Residues threonine 21, leucine 71, leucine 93, and threonine 112 each coordinate S-adenosyl-L-methionine.

The protein belongs to the TDD superfamily. TSR3 family.

The protein localises to the cytoplasm. The enzyme catalyses an N(1)-methylpseudouridine in rRNA + S-adenosyl-L-methionine = N(1)-methyl-N(3)-[(3S)-3-amino-3-carboxypropyl]pseudouridine in rRNA + S-methyl-5'-thioadenosine + H(+). In terms of biological role, aminocarboxypropyltransferase that catalyzes the aminocarboxypropyl transfer on pseudouridine at position 914 in 16S rRNA. It constitutes the last step in biosynthesis of the hypermodified N1-methyl-N3-(3-amino-3-carboxypropyl) pseudouridine (m1acp3-Psi). This Methanocaldococcus jannaschii (strain ATCC 43067 / DSM 2661 / JAL-1 / JCM 10045 / NBRC 100440) (Methanococcus jannaschii) protein is 16S rRNA aminocarboxypropyltransferase.